The sequence spans 364 residues: Aminomethyltransferase (364 aa).

It belongs to the GcvT family. As to quaternary structure, the glycine cleavage system is composed of four proteins: P, T, L and H.

The enzyme catalyses N(6)-[(R)-S(8)-aminomethyldihydrolipoyl]-L-lysyl-[protein] + (6S)-5,6,7,8-tetrahydrofolate = N(6)-[(R)-dihydrolipoyl]-L-lysyl-[protein] + (6R)-5,10-methylene-5,6,7,8-tetrahydrofolate + NH4(+). In terms of biological role, the glycine cleavage system catalyzes the degradation of glycine. This chain is Aminomethyltransferase, found in Desulforamulus reducens (strain ATCC BAA-1160 / DSM 100696 / MI-1) (Desulfotomaculum reducens).